Consider the following 81-residue polypeptide: ATP synthase subunit c, chloroplastic (81 aa).

A run of 2 helical transmembrane segments spans residues 3-23 (PLIAAASVIAAGLAVGLASIG) and 57-77 (LAFMEALTIYGLVVALALLFA).

It belongs to the ATPase C chain family. As to quaternary structure, F-type ATPases have 2 components, F(1) - the catalytic core - and F(0) - the membrane proton channel. F(1) has five subunits: alpha(3), beta(3), gamma(1), delta(1), epsilon(1). F(0) has four main subunits: a(1), b(1), b'(1) and c(10-14). The alpha and beta chains form an alternating ring which encloses part of the gamma chain. F(1) is attached to F(0) by a central stalk formed by the gamma and epsilon chains, while a peripheral stalk is formed by the delta, b and b' chains.

It localises to the plastid. The protein resides in the chloroplast thylakoid membrane. In terms of biological role, f(1)F(0) ATP synthase produces ATP from ADP in the presence of a proton or sodium gradient. F-type ATPases consist of two structural domains, F(1) containing the extramembraneous catalytic core and F(0) containing the membrane proton channel, linked together by a central stalk and a peripheral stalk. During catalysis, ATP synthesis in the catalytic domain of F(1) is coupled via a rotary mechanism of the central stalk subunits to proton translocation. Key component of the F(0) channel; it plays a direct role in translocation across the membrane. A homomeric c-ring of between 10-14 subunits forms the central stalk rotor element with the F(1) delta and epsilon subunits. This is ATP synthase subunit c, chloroplastic from Pisum sativum (Garden pea).